The primary structure comprises 544 residues: Involucrin (544 aa).

The tract at residues 1–520 (MSQQHTLPVT…GQVQGIQQAL (520 aa)) is disordered. The segment covering 76–90 (EQQQQPQEQKLQQQH) has biased composition (low complexity). Composition is skewed to basic and acidic residues over residues 96 to 117 (EHQK…REKQ), 124 to 152 (EEEK…KEQL), 202 to 234 (QLKH…KQSE), 252 to 271 (QLKH…HQEG), 283 to 297 (KHLE…HPEQ), 304 to 347 (QLEE…HPEQ), 354 to 411 (QLEE…REEQ), 423 to 437 (KHLE…HPEQ), and 462 to 476 (KHLE…HPEQ). Positions 477 to 494 (QEGQLKPQEQQEGQLKGL) are enriched in low complexity.

It belongs to the involucrin family. In terms of assembly, directly or indirectly cross-linked to cornifelin (CNFN). Post-translationally, substrate of transglutaminase. Specific glutamines or lysines are cross-linked to keratins, desmoplakin and to inter involucrin molecules. In terms of tissue distribution, keratinocytes of epidermis and other stratified squamous epithelia.

Its subcellular location is the cytoplasm. Part of the insoluble cornified cell envelope (CE) of stratified squamous epithelia. This chain is Involucrin (IVL), found in Aotus trivirgatus (Three-striped night monkey).